Consider the following 44-residue polypeptide: Protein PsbN (44 aa).

Residues 6 to 26 (FFYGVFLWCLLISVTGYSIYI) traverse the membrane as a helical segment.

This sequence belongs to the PsbN family.

It is found in the plastid. It localises to the chloroplast thylakoid membrane. In terms of biological role, may play a role in photosystem I and II biogenesis. The protein is Protein PsbN of Ostreococcus tauri.